The chain runs to 388 residues: Succinate--CoA ligase [ADP-forming] subunit beta (388 aa).

One can recognise an ATP-grasp domain in the interval 9 to 244 (KQLFARYGLP…PSQEDSREAH (236 aa)). ATP is bound by residues K46, 53-55 (GRG), E99, T102, and E107. Mg(2+) is bound by residues N199 and D213. Substrate-binding positions include N264 and 321–323 (GIV).

It belongs to the succinate/malate CoA ligase beta subunit family. Heterotetramer of two alpha and two beta subunits. Mg(2+) is required as a cofactor.

The catalysed reaction is succinate + ATP + CoA = succinyl-CoA + ADP + phosphate. It catalyses the reaction GTP + succinate + CoA = succinyl-CoA + GDP + phosphate. The protein operates within carbohydrate metabolism; tricarboxylic acid cycle; succinate from succinyl-CoA (ligase route): step 1/1. Functionally, succinyl-CoA synthetase functions in the citric acid cycle (TCA), coupling the hydrolysis of succinyl-CoA to the synthesis of either ATP or GTP and thus represents the only step of substrate-level phosphorylation in the TCA. The beta subunit provides nucleotide specificity of the enzyme and binds the substrate succinate, while the binding sites for coenzyme A and phosphate are found in the alpha subunit. In Pectobacterium atrosepticum (strain SCRI 1043 / ATCC BAA-672) (Erwinia carotovora subsp. atroseptica), this protein is Succinate--CoA ligase [ADP-forming] subunit beta.